The sequence spans 156 residues: Phosphopantetheine adenylyltransferase (156 aa).

Position 10 (Thr10) interacts with substrate. Residues Thr10–Phe11 and His18 each bind ATP. 3 residues coordinate substrate: Lys42, Leu74, and Arg88. ATP-binding positions include Gly89–Arg91, Glu99, and Asn124–Ser130.

It belongs to the bacterial CoaD family. Homohexamer. The cofactor is Mg(2+).

It is found in the cytoplasm. The catalysed reaction is (R)-4'-phosphopantetheine + ATP + H(+) = 3'-dephospho-CoA + diphosphate. It participates in cofactor biosynthesis; coenzyme A biosynthesis; CoA from (R)-pantothenate: step 4/5. Its function is as follows. Reversibly transfers an adenylyl group from ATP to 4'-phosphopantetheine, yielding dephospho-CoA (dPCoA) and pyrophosphate. The polypeptide is Phosphopantetheine adenylyltransferase (Campylobacter curvus (strain 525.92)).